Consider the following 172-residue polypeptide: uncharacterized protein (172 aa).

A compositionally biased stretch (gly residues) spans 147 to 159 (AGSGSGSGSGSGS). Residues 147 to 172 (AGSGSGSGSGSGSDTGPFKKSQYKIL) form a disordered region.

This is an uncharacterized protein from Homo sapiens (Human).